Consider the following 213-residue polypeptide: High frequency lysogenization protein HflD homolog (213 aa).

A coiled-coil region spans residues 79 to 122; the sequence is QGLNAELTRYTLSLMVLERKLSSAKGALNTLGDRINGLQRQLDH.

It belongs to the HflD family.

It is found in the cytoplasm. The protein resides in the cell inner membrane. This is High frequency lysogenization protein HflD homolog from Salmonella agona (strain SL483).